The primary structure comprises 156 residues: Small ribosomal subunit protein uS7 (156 aa).

The protein belongs to the universal ribosomal protein uS7 family. Part of the 30S ribosomal subunit. Contacts proteins S9 and S11.

Functionally, one of the primary rRNA binding proteins, it binds directly to 16S rRNA where it nucleates assembly of the head domain of the 30S subunit. Is located at the subunit interface close to the decoding center, probably blocks exit of the E-site tRNA. The protein is Small ribosomal subunit protein uS7 of Dinoroseobacter shibae (strain DSM 16493 / NCIMB 14021 / DFL 12).